A 453-amino-acid polypeptide reads, in one-letter code: MKTLSPAVITLLWRQDAAEFYFSRLSHLPWAMLLHSGYADHPYSRFDIVVAEPICTLTTFGKETVVSESEKRTTTTDDPLQVLQQVLDRADIRPTHNEDLPFQGGALGLFGYDLGRRFESLPEIAEQDIVLPDMAVGIYDWALIVDHQRHTVSLLSHNDVNARRAWLESQQFSPQEDFTLTSDWQSNMTREQYGEKFRQVQEYLHSGDCYQVNLAQRFHATYSGDEWQAFLQLNQANRAPFSAFLRLEQGAILSLSPERFILCDNSEIQTRPIKGTLPRLPDPQEDSKQAVKLANSAKDRAENLMIVDLMRNDIGRVAVAGSVKVPELFVVEPFPAVHHLVSTITAQLPEQLHASDLLRAAFPGGSITGAPKVRAMEIIDELEPQRRNAWCGSIGYLSFCGNMDTSITIRTLTAINGQIFCSAGGGIVADSQEEAEYQETFDKVNRILKQLEK.

L-tryptophan contacts are provided by residues serine 36, tyrosine 43–phenylalanine 46, and proline 240–serine 242. The active-site Proton donor is glutamate 258. Residue lysine 274 is the N6-(4-deoxychorismate)-lysine intermediate of the active site.

The protein belongs to the anthranilate synthase component I family. As to quaternary structure, monomer. Heterodimer consisting of two non-identical subunits: a glutamine amidotransferase subunit (PabA) and a aminodeoxychorismate synthase subunit (PabB). It depends on Mg(2+) as a cofactor.

It catalyses the reaction chorismate + L-glutamine = 4-amino-4-deoxychorismate + L-glutamate. Its pathway is cofactor biosynthesis; tetrahydrofolate biosynthesis; 4-aminobenzoate from chorismate: step 1/2. With respect to regulation, inhibited by 6-diazo-5-oxo-L-norleucine (DON). The inhibition is competitive with glutamine but uncompetitive with chorismate. Also inhibited by 2-fluorochorismate. Part of a heterodimeric complex that catalyzes the two-step biosynthesis of 4-amino-4-deoxychorismate (ADC), a precursor of p-aminobenzoate (PABA) and tetrahydrofolate. In the first step, a glutamine amidotransferase (PabA) generates ammonia as a substrate that, along with chorismate, is used in the second step, catalyzed by aminodeoxychorismate synthase (PabB) to produce ADC. PabB, in the absence of PabA, can catalyze the formation of ADC in the presence of exogenous ammonia. The chain is Aminodeoxychorismate synthase component 1 (pabB) from Escherichia coli (strain K12).